The chain runs to 555 residues: CTP synthase (555 aa).

The segment at 1 to 279 is amidoligase domain; that stretch reads MATNRAKSST…DNYIIRRLNL (279 aa). S21 is a CTP binding site. S21 contacts UTP. ATP contacts are provided by residues 22-27 and D79; that span reads SLGKGL. D79 and E153 together coordinate Mg(2+). CTP contacts are provided by residues 160–162, 200–205, and K236; these read DIE and KTKPTQ. UTP is bound by residues 200–205 and K236; that span reads KTKPTQ. The 250-residue stretch at 304–553 folds into the Glutamine amidotransferase type-1 domain; that stretch reads TIGIVGKYID…VDAALKHQAG (250 aa). G367 provides a ligand contact to L-glutamine. Residue C394 is the Nucleophile; for glutamine hydrolysis of the active site. L-glutamine-binding positions include 395 to 398, E417, and R478; that span reads LGLQ. Residues H526 and E528 contribute to the active site.

This sequence belongs to the CTP synthase family. In terms of assembly, homotetramer.

The catalysed reaction is UTP + L-glutamine + ATP + H2O = CTP + L-glutamate + ADP + phosphate + 2 H(+). The enzyme catalyses L-glutamine + H2O = L-glutamate + NH4(+). It catalyses the reaction UTP + NH4(+) + ATP = CTP + ADP + phosphate + 2 H(+). It functions in the pathway pyrimidine metabolism; CTP biosynthesis via de novo pathway; CTP from UDP: step 2/2. With respect to regulation, allosterically activated by GTP, when glutamine is the substrate; GTP has no effect on the reaction when ammonia is the substrate. The allosteric effector GTP functions by stabilizing the protein conformation that binds the tetrahedral intermediate(s) formed during glutamine hydrolysis. Inhibited by the product CTP, via allosteric rather than competitive inhibition. Its function is as follows. Catalyzes the ATP-dependent amination of UTP to CTP with either L-glutamine or ammonia as the source of nitrogen. Regulates intracellular CTP levels through interactions with the four ribonucleotide triphosphates. The chain is CTP synthase from Corynebacterium jeikeium (strain K411).